Here is a 318-residue protein sequence, read N- to C-terminus: Ferrochelatase (318 aa).

Residues His-194 and Glu-275 each contribute to the Fe cation site.

Belongs to the ferrochelatase family.

Its subcellular location is the cytoplasm. It catalyses the reaction heme b + 2 H(+) = protoporphyrin IX + Fe(2+). It participates in porphyrin-containing compound metabolism; protoheme biosynthesis; protoheme from protoporphyrin-IX: step 1/1. Functionally, catalyzes the ferrous insertion into protoporphyrin IX. This is Ferrochelatase from Xanthomonas axonopodis pv. citri (strain 306).